The following is a 174-amino-acid chain: Ribosome maturation factor RimM (174 aa).

In terms of domain architecture, PRC barrel spans 97-169; it reads PDTYYDHQLE…ILEIDPPDGL (73 aa).

Belongs to the RimM family. As to quaternary structure, binds ribosomal protein uS19.

Its subcellular location is the cytoplasm. Functionally, an accessory protein needed during the final step in the assembly of 30S ribosomal subunit, possibly for assembly of the head region. Essential for efficient processing of 16S rRNA. May be needed both before and after RbfA during the maturation of 16S rRNA. It has affinity for free ribosomal 30S subunits but not for 70S ribosomes. The chain is Ribosome maturation factor RimM from Mycobacterium ulcerans (strain Agy99).